The chain runs to 841 residues: Protein translocase subunit SecA (841 aa).

ATP-binding positions include Gln85, 103 to 107 (GEGKT), and Asp492. Residues 788 to 841 (EVVQGQTTAHQPQEGDEEKTVKKKPVRKVVDIGRNSPCHCGSGKKYKNCHGKTE) are disordered. Positions 825, 827, 836, and 837 each coordinate Zn(2+). A compositionally biased stretch (basic residues) spans 829–841 (SGKKYKNCHGKTE).

It belongs to the SecA family. As to quaternary structure, monomer and homodimer. Part of the essential Sec protein translocation apparatus which comprises SecA, SecYEG and auxiliary proteins SecDF. Other proteins may also be involved. Requires Zn(2+) as cofactor.

It is found in the cell membrane. The protein resides in the cytoplasm. The catalysed reaction is ATP + H2O + cellular proteinSide 1 = ADP + phosphate + cellular proteinSide 2.. Its function is as follows. Part of the Sec protein translocase complex. Interacts with the SecYEG preprotein conducting channel. Has a central role in coupling the hydrolysis of ATP to the transfer of proteins into and across the cell membrane, serving as an ATP-driven molecular motor driving the stepwise translocation of polypeptide chains across the membrane. The sequence is that of Protein translocase subunit SecA from Bacillus pumilus (strain SAFR-032).